Here is a 354-residue protein sequence, read N- to C-terminus: Probable alcohol acetyltransferase (354 aa).

Residues Ser124 and His293 each act as charge relay system in the active site.

This sequence belongs to the AB hydrolase superfamily.

Functionally, probable alcohol acetyltransferase that uses acetyl-CoA to synthesize acetate esters from various alcohols. Not involved in the synthesis of ethyl acetate. This is Probable alcohol acetyltransferase (EAT2) from Cyberlindnera jadinii (strain ATCC 18201 / CBS 1600 / BCRC 20928 / JCM 3617 / NBRC 0987 / NRRL Y-1542) (Torula yeast).